Here is a 331-residue protein sequence, read N- to C-terminus: Putative NAD(P)H nitroreductase acg (331 aa).

Residues 28-32 and arginine 316 each bind FMN; that span reads QPWRW.

Belongs to the nitroreductase family. FMN serves as cofactor.

The protein is Putative NAD(P)H nitroreductase acg (acg) of Mycobacterium tuberculosis (strain CDC 1551 / Oshkosh).